The sequence spans 86 residues: Large ribosomal subunit protein bL31B (86 aa).

Belongs to the bacterial ribosomal protein bL31 family. Type B subfamily. As to quaternary structure, part of the 50S ribosomal subunit.

This Saccharopolyspora erythraea (strain ATCC 11635 / DSM 40517 / JCM 4748 / NBRC 13426 / NCIMB 8594 / NRRL 2338) protein is Large ribosomal subunit protein bL31B.